A 99-amino-acid polypeptide reads, in one-letter code: MICOS complex subunit MIC10 (99 aa).

Transmembrane regions (helical) follow at residues Arg-27–Phe-43 and Trp-50–Thr-66.

The protein belongs to the MICOS complex subunit Mic10 family. As to quaternary structure, component of the mitochondrial contact site and cristae organizing system (MICOS) complex. The MICOS complex associates with mitochondrial outer membrane proteins. Present in a large lipid-enriched complex called mitochondrial transmembrane lipoprotein (MTL) complex made of proteins located in the two mitochondrial membranes, including the TOM complex and the core components of the MICOS complex and containing at least digalactosyldiacylglycerol (DGDG).

It is found in the mitochondrion inner membrane. Component of the MICOS complex, a large protein complex of the mitochondrial inner membrane that plays crucial roles in the maintenance of crista junctions, inner membrane architecture, and formation of contact sites to the outer membrane. This is MICOS complex subunit MIC10 from Arabidopsis thaliana (Mouse-ear cress).